The sequence spans 469 residues: Uronate isomerase (469 aa).

This sequence belongs to the metallo-dependent hydrolases superfamily. Uronate isomerase family.

The enzyme catalyses D-glucuronate = D-fructuronate. It catalyses the reaction aldehydo-D-galacturonate = keto-D-tagaturonate. It functions in the pathway carbohydrate metabolism; pentose and glucuronate interconversion. The chain is Uronate isomerase from Pectobacterium atrosepticum (strain SCRI 1043 / ATCC BAA-672) (Erwinia carotovora subsp. atroseptica).